A 79-amino-acid chain; its full sequence is DNA-directed RNA polymerase subunit omega (79 aa).

The protein belongs to the RNA polymerase subunit omega family. In terms of assembly, the RNAP catalytic core consists of 2 alpha, 1 beta, 1 beta' and 1 omega subunit. When a sigma factor is associated with the core the holoenzyme is formed, which can initiate transcription.

It catalyses the reaction RNA(n) + a ribonucleoside 5'-triphosphate = RNA(n+1) + diphosphate. Promotes RNA polymerase assembly. Latches the N- and C-terminal regions of the beta' subunit thereby facilitating its interaction with the beta and alpha subunits. This chain is DNA-directed RNA polymerase subunit omega, found in Thermotoga neapolitana (strain ATCC 49049 / DSM 4359 / NBRC 107923 / NS-E).